Reading from the N-terminus, the 138-residue chain is Lutropin subunit beta (138 aa).

The N-terminal stretch at 1 to 19 (RYQELTVLLLLLLEGGSWG) is a signal peptide. 6 disulfide bridges follow: Cys-27-Cys-75, Cys-41-Cys-90, Cys-44-Cys-128, Cys-52-Cys-106, Cys-56-Cys-108, and Cys-111-Cys-118. The N-linked (GlcNAc...) asparagine glycan is linked to Asn-31.

The protein belongs to the glycoprotein hormones subunit beta family. In terms of assembly, heterodimer of a common alpha chain and a unique beta chain which confers biological specificity to thyrotropin, lutropin, follitropin and gonadotropin.

The protein localises to the secreted. In terms of biological role, promotes spermatogenesis and ovulation by stimulating the testes and ovaries to synthesize steroids. The polypeptide is Lutropin subunit beta (LHB) (Osphranter rufus (Red kangaroo)).